The primary structure comprises 123 residues: Large ribosomal subunit protein bL12 (123 aa).

Belongs to the bacterial ribosomal protein bL12 family. As to quaternary structure, homodimer. Part of the ribosomal stalk of the 50S ribosomal subunit. Forms a multimeric L10(L12)X complex, where L10 forms an elongated spine to which 2 to 4 L12 dimers bind in a sequential fashion. Binds GTP-bound translation factors.

Forms part of the ribosomal stalk which helps the ribosome interact with GTP-bound translation factors. Is thus essential for accurate translation. This Metamycoplasma arthritidis (strain 158L3-1) (Mycoplasma arthritidis) protein is Large ribosomal subunit protein bL12.